We begin with the raw amino-acid sequence, 294 residues long: Protoheme IX farnesyltransferase (294 aa).

9 helical membrane passes run 22 to 42 (VTQL…PDLP), 46 to 66 (IVIA…AINC), 89 to 109 (ITVP…MWVL), 116 to 136 (LTMW…TIIL), 143 to 163 (NIVI…AAVA), 170 to 190 (AWIL…ALAL), 211 to 231 (AFTQ…TMLP), 232 to 252 (FAVG…DVIF), and 272 to 292 (FTYS…DHYL).

The protein belongs to the UbiA prenyltransferase family. Protoheme IX farnesyltransferase subfamily.

The protein resides in the cell inner membrane. It catalyses the reaction heme b + (2E,6E)-farnesyl diphosphate + H2O = Fe(II)-heme o + diphosphate. The protein operates within porphyrin-containing compound metabolism; heme O biosynthesis; heme O from protoheme: step 1/1. Its function is as follows. Converts heme B (protoheme IX) to heme O by substitution of the vinyl group on carbon 2 of heme B porphyrin ring with a hydroxyethyl farnesyl side group. The sequence is that of Protoheme IX farnesyltransferase from Herminiimonas arsenicoxydans.